The chain runs to 191 residues: Xanthine phosphoribosyltransferase (191 aa).

Positions 20 and 27 each coordinate xanthine. 5-phospho-alpha-D-ribose 1-diphosphate is bound at residue A128–A132. A xanthine-binding site is contributed by K156.

This sequence belongs to the purine/pyrimidine phosphoribosyltransferase family. Xpt subfamily. As to quaternary structure, homodimer.

Its subcellular location is the cytoplasm. The enzyme catalyses XMP + diphosphate = xanthine + 5-phospho-alpha-D-ribose 1-diphosphate. The protein operates within purine metabolism; XMP biosynthesis via salvage pathway; XMP from xanthine: step 1/1. Its function is as follows. Converts the preformed base xanthine, a product of nucleic acid breakdown, to xanthosine 5'-monophosphate (XMP), so it can be reused for RNA or DNA synthesis. This Levilactobacillus brevis (strain ATCC 367 / BCRC 12310 / CIP 105137 / JCM 1170 / LMG 11437 / NCIMB 947 / NCTC 947) (Lactobacillus brevis) protein is Xanthine phosphoribosyltransferase.